We begin with the raw amino-acid sequence, 396 residues long: Phosphoglycerate kinase (396 aa).

Substrate is bound by residues 21–23, Arg37, 60–63, Arg121, and Arg154; these read DFN and HLGR. ATP contacts are provided by residues Lys205, Gly296, Glu327, and 353 to 356; that span reads GGDS.

Belongs to the phosphoglycerate kinase family. In terms of assembly, monomer.

The protein resides in the cytoplasm. The catalysed reaction is (2R)-3-phosphoglycerate + ATP = (2R)-3-phospho-glyceroyl phosphate + ADP. The protein operates within carbohydrate degradation; glycolysis; pyruvate from D-glyceraldehyde 3-phosphate: step 2/5. This is Phosphoglycerate kinase from Anaeromyxobacter sp. (strain K).